Consider the following 169-residue polypeptide: Peptide deformylase (169 aa).

Positions 91 and 133 each coordinate Fe cation. Residue glutamate 134 is part of the active site. Histidine 137 contacts Fe cation.

This sequence belongs to the polypeptide deformylase family. Fe(2+) serves as cofactor.

The enzyme catalyses N-terminal N-formyl-L-methionyl-[peptide] + H2O = N-terminal L-methionyl-[peptide] + formate. Removes the formyl group from the N-terminal Met of newly synthesized proteins. Requires at least a dipeptide for an efficient rate of reaction. N-terminal L-methionine is a prerequisite for activity but the enzyme has broad specificity at other positions. The protein is Peptide deformylase of Haemophilus influenzae (strain 86-028NP).